A 443-amino-acid polypeptide reads, in one-letter code: ATP-dependent protease ATPase subunit HslU (443 aa).

Residues Ile19, 61–66, Asp256, Glu321, and Arg393 contribute to the ATP site; that span reads GVGKTE.

It belongs to the ClpX chaperone family. HslU subfamily. In terms of assembly, a double ring-shaped homohexamer of HslV is capped on each side by a ring-shaped HslU homohexamer. The assembly of the HslU/HslV complex is dependent on binding of ATP.

It localises to the cytoplasm. Functionally, ATPase subunit of a proteasome-like degradation complex; this subunit has chaperone activity. The binding of ATP and its subsequent hydrolysis by HslU are essential for unfolding of protein substrates subsequently hydrolyzed by HslV. HslU recognizes the N-terminal part of its protein substrates and unfolds these before they are guided to HslV for hydrolysis. The polypeptide is ATP-dependent protease ATPase subunit HslU (Cupriavidus pinatubonensis (strain JMP 134 / LMG 1197) (Cupriavidus necator (strain JMP 134))).